Reading from the N-terminus, the 75-residue chain is Small ribosomal subunit protein bS16 (75 aa).

The protein belongs to the bacterial ribosomal protein bS16 family.

This chain is Small ribosomal subunit protein bS16, found in Campylobacter fetus subsp. fetus (strain 82-40).